The chain runs to 268 residues: Hydroxyethylthiazole kinase (268 aa).

Methionine 46 lines the substrate pocket. ATP is bound by residues arginine 122 and threonine 168. A substrate-binding site is contributed by glycine 195.

This sequence belongs to the Thz kinase family. It depends on Mg(2+) as a cofactor.

It catalyses the reaction 5-(2-hydroxyethyl)-4-methylthiazole + ATP = 4-methyl-5-(2-phosphooxyethyl)-thiazole + ADP + H(+). The protein operates within cofactor biosynthesis; thiamine diphosphate biosynthesis; 4-methyl-5-(2-phosphoethyl)-thiazole from 5-(2-hydroxyethyl)-4-methylthiazole: step 1/1. Its function is as follows. Catalyzes the phosphorylation of the hydroxyl group of 4-methyl-5-beta-hydroxyethylthiazole (THZ). In Desulfatibacillum aliphaticivorans, this protein is Hydroxyethylthiazole kinase.